Here is a 175-residue protein sequence, read N- to C-terminus: ATP-dependent protease subunit HslV (175 aa).

The active site involves T2. 3 residues coordinate Na(+): G158, C161, and T164.

It belongs to the peptidase T1B family. HslV subfamily. A double ring-shaped homohexamer of HslV is capped on each side by a ring-shaped HslU homohexamer. The assembly of the HslU/HslV complex is dependent on binding of ATP.

Its subcellular location is the cytoplasm. The catalysed reaction is ATP-dependent cleavage of peptide bonds with broad specificity.. With respect to regulation, allosterically activated by HslU binding. In terms of biological role, protease subunit of a proteasome-like degradation complex believed to be a general protein degrading machinery. In Haemophilus influenzae (strain PittEE), this protein is ATP-dependent protease subunit HslV.